The following is a 6486-amino-acid chain: Tyrocidine synthase 3 (6486 aa).

The segment at 466 to 1038 (IFELIAEQAS…VAELARFLSR (573 aa)) is domain 1 (asparagine-activating). Carrier domains lie at 965 to 1040 (APQN…SRSE), 2002 to 2077 (APRN…AAAR), 3040 to 3115 (APTN…ATSG), 4075 to 4150 (AAQN…AESA), 5119 to 5194 (APRS…EETA), and 6162 to 6237 (APRN…THKR). An O-(pantetheine 4'-phosphoryl)serine mark is found at S1000, S2037, S3075, S4110, S5154, and S6197. Positions 1521 to 2070 (YEEYALTYRE…FESPTIAGLA (550 aa)) are domain 2 (glutamine-activating). Positions 2536 to 3113 (NKTLQALFEE…IKALAQYVAT (578 aa)) are domain 3 (tyrosine-activating). Positions 3590 to 4149 (EHAAVVMDGQ…HELAAHIAES (560 aa)) are domain 4 (valine-activating). Residues 4606–5203 (YPTDKTFQKL…AKGNVFSIEP (598 aa)) are domain 5 (ornithine-activating). The segment at 5658-6245 (LHQLFEEQVD…KRFESRYGTA (588 aa)) is domain 6 (leucine-activating).

This sequence belongs to the ATP-dependent AMP-binding enzyme family. In terms of assembly, large multienzyme complex of TycA, TycB and TycC. Pantetheine 4'-phosphate is required as a cofactor.

It participates in antibiotic biosynthesis; tyrocidine biosynthesis. Functionally, incorporates six amino acids (for tyrocidine A, Asn, Gln, Tyr, Val, Orn, and Leu) in their L-configuration into the peptide product. The sequence is that of Tyrocidine synthase 3 (tycC) from Brevibacillus parabrevis.